A 147-amino-acid chain; its full sequence is uncharacterized protein (147 aa).

In terms of domain architecture, ABM spans 50–138 (IVVAGNIKVK…LLAKPAEIKI (89 aa)).

It belongs to the LsrG family.

This is an uncharacterized protein from Synechocystis sp. (strain ATCC 27184 / PCC 6803 / Kazusa).